Here is a 196-residue protein sequence, read N- to C-terminus: Pyridoxal 5'-phosphate synthase subunit PdxT (196 aa).

Residue 52–54 (GES) coordinates L-glutamine. C84 serves as the catalytic Nucleophile. L-glutamine contacts are provided by residues R113 and 141–142 (IR). Active-site charge relay system residues include H178 and E180.

Belongs to the glutaminase PdxT/SNO family. As to quaternary structure, in the presence of PdxS, forms a dodecamer of heterodimers. Only shows activity in the heterodimer.

The enzyme catalyses aldehydo-D-ribose 5-phosphate + D-glyceraldehyde 3-phosphate + L-glutamine = pyridoxal 5'-phosphate + L-glutamate + phosphate + 3 H2O + H(+). It carries out the reaction L-glutamine + H2O = L-glutamate + NH4(+). It functions in the pathway cofactor biosynthesis; pyridoxal 5'-phosphate biosynthesis. Functionally, catalyzes the hydrolysis of glutamine to glutamate and ammonia as part of the biosynthesis of pyridoxal 5'-phosphate. The resulting ammonia molecule is channeled to the active site of PdxS. This is Pyridoxal 5'-phosphate synthase subunit PdxT from Pyrococcus horikoshii (strain ATCC 700860 / DSM 12428 / JCM 9974 / NBRC 100139 / OT-3).